The sequence spans 179 residues: Large ribosomal subunit protein uL6 (179 aa).

Belongs to the universal ribosomal protein uL6 family. Part of the 50S ribosomal subunit.

Functionally, this protein binds to the 23S rRNA, and is important in its secondary structure. It is located near the subunit interface in the base of the L7/L12 stalk, and near the tRNA binding site of the peptidyltransferase center. The sequence is that of Large ribosomal subunit protein uL6 from Prochlorococcus marinus (strain MIT 9211).